The primary structure comprises 669 residues: Diacylglycerol lipase-beta (669 aa).

Over 1 to 17 the chain is Cytoplasmic; that stretch reads MPGMVLFGRRWSLASDD. Residues 18–38 form a helical membrane-spanning segment; sequence LVFPGSFELFLRVLWWIVSLT. Over 39–58 the chain is Extracellular; the sequence is LYLTHRRRLDCPGGVLLSTY. A helical transmembrane segment spans residues 59–79; that stretch reads LIVLLVLLAVIICTVLAIVCV. The Cytoplasmic segment spans residues 80–102; sequence SMRGTICNPGPRKSMSKLLYIRL. Residues 103–123 traverse the membrane as a helical segment; the sequence is ALFLPEMVWASLGAAWVAKGI. The Extracellular segment spans residues 124–128; it reads QCDRT. The helical transmembrane segment at 129–149 threads the bilayer; that stretch reads VVIGIIATVIVSWIVIAATMV. At 150–669 the chain is on the cytoplasmic side; sequence TIIFVFDPLG…CPGQGGSSVP (520 aa). Catalysis depends on charge relay system residues serine 443 and aspartate 495. 3 positions are modified to phosphoserine: serine 570, serine 578, and serine 582.

This sequence belongs to the AB hydrolase superfamily. Lipase family. Ca(2+) serves as cofactor. As to expression, expressed in liver and immune cells such as macrophages and microglias. In embryonic brains present in axonal tracts, while in adults localizes to dendritic fields, correlating with the developmental change in requirement for 2-AG synthesis from the pre- to the postsynaptic compartment (at protein level).

The protein resides in the cell membrane. The catalysed reaction is a 1,2-diacyl-sn-glycerol + H2O = a 2-acylglycerol + a fatty acid + H(+). It carries out the reaction 1-octadecanoyl-2-(5Z,8Z,11Z,14Z-eicosatetraenoyl)-sn-glycerol + H2O = 2-(5Z,8Z,11Z,14Z-eicosatetraenoyl)-glycerol + octadecanoate + H(+). The enzyme catalyses 1,2-di-(9Z-octadecenoyl)-sn-glycerol + H2O = 2-(9Z-octadecenoyl)-glycerol + (9Z)-octadecenoate + H(+). It catalyses the reaction 1-(9Z-octadecenoyl)-2-(5Z,8Z,11Z,14Z-eicosatetraenoyl)-sn-glycerol + H2O = 2-(5Z,8Z,11Z,14Z-eicosatetraenoyl)-glycerol + (9Z)-octadecenoate + H(+). The catalysed reaction is 1-(9Z-octadecenoyl)-2-octadecanoyl-sn-glycerol + H2O = 2-octadecanoylglycerol + (9Z)-octadecenoate + H(+). It carries out the reaction 1-(9Z-octadecenoyl)-2-(9Z,12Z-octadecadienoyl)-sn-glycerol + H2O = 2-(9Z,12Z-octadecadienoyl)-glycerol + (9Z)-octadecenoate + H(+). The enzyme catalyses 1-(9Z-octadecenoyl)-2-O-(5Z,8Z,11Z,14Z-eicosatetraenyl)-sn-glycerol + H2O = 2-O-(5Z,8Z,11Z,14Z)-eicosatetraenylglycerol + (9Z)-octadecenoate + H(+). It catalyses the reaction a triacylglycerol + H2O = a diacylglycerol + a fatty acid + H(+). The catalysed reaction is 1,2,3-tri-(5Z,8Z,11Z,14Z-eicosatetraenoyl)-glycerol + H2O = 1,2-di-(5Z,8Z,11Z,14Z-eicosatetraenoyl)-glycerol + (5Z,8Z,11Z,14Z)-eicosatetraenoate + H(+). It carries out the reaction 1,2,3-(4Z,7Z,10Z,13Z,16Z,19Z-docosahexaenoyl)-glycerol + H2O = 1,2-di-(4Z,7Z,10Z,13Z,16Z,19Z-docosahexaenoyl)-glycerol + (4Z,7Z,10Z,13Z,16Z,19Z)-docosahexaenoate + H(+). Inhibited by the 1,2,3-triazole urea covalent inhibitors KT109 and KT172. Inhibited by p-hydroxy-mercuri-benzoate and HgCl(2), but not by PMSF. Also inhibited by RHC80267, a drug that blocks 2-AG formation. Lipase that catalyzes the hydrolysis of arachidonic acid (AA)-esterified diacylglycerols (DAGs) to produce the principal endocannabinoid, 2-arachidonoylglycerol (2-AG) which can be further cleaved by downstream enzymes to release arachidonic acid (AA) for cyclooxygenase (COX)-mediated eicosanoid production. Preferentially hydrolyzes DAGs at the sn-1 position in a calcium-dependent manner and has negligible activity against other lipids including monoacylglycerols and phospholipids. Plays a key role in the regulation of 2-AG and AA pools utilized by COX1/2 to generate lipid mediators of macrophage and microglia inflammatory responses. Also functions as a polyunsaturated fatty acids-specific triacylglycerol lipase in macrophages. Plays an important role to support the metabolic and signaling demands of macrophages. In Mus musculus (Mouse), this protein is Diacylglycerol lipase-beta (Daglb).